A 214-amino-acid chain; its full sequence is GTP-binding nuclear protein GSP1 (214 aa).

One can recognise a Small GTPase Ran-type domain in the interval 4–172 (RELTYKICLI…LHLARIFTGR (169 aa)). A GTP-binding site is contributed by 17–22 (GVGKTT). The segment at 34-42 (KNYNATVGA) is switch-I. Residues Gly-66, 121-124 (NKID), and 151-153 (SAK) each bind GTP. The segment at 66 to 82 (GQEKKAVLKDVYYIGAS) is switch-II.

The protein belongs to the small GTPase superfamily. Ran family. As to quaternary structure, found in a nuclear export complex with RanGTP, exportin and pre-miRNA.

Its subcellular location is the nucleus. GTP-binding protein involved in nucleocytoplasmic transport. Required for the import of protein into the nucleus and also for RNA export. This Encephalitozoon cuniculi (strain GB-M1) (Microsporidian parasite) protein is GTP-binding nuclear protein GSP1 (GSP1).